Here is a 310-residue protein sequence, read N- to C-terminus: 4-hydroxyproline 2-epimerase (310 aa).

Cysteine 88 serves as the catalytic Proton acceptor. Substrate-binding positions include 89–90 (GH), histidine 208, and aspartate 232. Cysteine 236 (proton donor) is an active-site residue. 237 to 238 (GT) contacts substrate.

The protein belongs to the proline racemase family.

It carries out the reaction trans-4-hydroxy-L-proline = cis-4-hydroxy-D-proline. In terms of biological role, catalyzes the epimerization of trans-4-hydroxy-L-proline (t4LHyp) to cis-4-hydroxy-D-proline (c4DHyp). Is likely involved in a degradation pathway that converts t4LHyp to alpha-ketoglutarate. Can also catalyze the dehydration of trans-3-hydroxy-L-proline (t3LHyp) to Delta(1)-pyrroline-2-carboxylate (Pyr2C), albeit with 42-fold lower efficiency. Displays no proline racemase activity. The protein is 4-hydroxyproline 2-epimerase of Burkholderia thailandensis (strain ATCC 700388 / DSM 13276 / CCUG 48851 / CIP 106301 / E264).